A 299-amino-acid polypeptide reads, in one-letter code: ATP phosphoribosyltransferase (299 aa).

The protein belongs to the ATP phosphoribosyltransferase family. Long subfamily. The cofactor is Mg(2+).

Its subcellular location is the cytoplasm. It carries out the reaction 1-(5-phospho-beta-D-ribosyl)-ATP + diphosphate = 5-phospho-alpha-D-ribose 1-diphosphate + ATP. It participates in amino-acid biosynthesis; L-histidine biosynthesis; L-histidine from 5-phospho-alpha-D-ribose 1-diphosphate: step 1/9. With respect to regulation, feedback inhibited by histidine. In terms of biological role, catalyzes the condensation of ATP and 5-phosphoribose 1-diphosphate to form N'-(5'-phosphoribosyl)-ATP (PR-ATP). Has a crucial role in the pathway because the rate of histidine biosynthesis seems to be controlled primarily by regulation of HisG enzymatic activity. This chain is ATP phosphoribosyltransferase, found in Shewanella halifaxensis (strain HAW-EB4).